Reading from the N-terminus, the 540-residue chain is [Co(II) methylated amine-specific corrinoid protein] reductase (540 aa).

4Fe-4S ferredoxin-type domains are found at residues 471–500 (IILE…IVER) and 504–535 (RIAK…ITKL). The [4Fe-4S] cluster site is built by C480, C483, C486, C490, C513, C518, C521, and C525.

Monomer. [4Fe-4S] cluster serves as cofactor.

The catalysed reaction is 2 Co(II)-[methylamine-specific corrinoid protein] + AH2 + ATP + H2O = 2 Co(I)-[methylamine-specific corrinoid protein] + A + ADP + phosphate + 3 H(+). The enzyme catalyses 2 Co(II)-[dimethylamine-specific corrinoid protein] + AH2 + ATP + H2O = 2 Co(I)-[dimethylamine-specific corrinoid protein] + A + ADP + phosphate + 3 H(+). It catalyses the reaction 2 Co(II)-[trimethylamine-specific corrinoid protein] + AH2 + ATP + H2O = 2 Co(I)-[trimethylamine-specific corrinoid protein] + A + ADP + phosphate + 3 H(+). It participates in one-carbon metabolism; methanogenesis from methylamine. The protein operates within one-carbon metabolism; methanogenesis from dimethylamine. It functions in the pathway one-carbon metabolism; methanogenesis from trimethylamine. Functionally, reductase required for the activation of corrinoid-dependent methylamine methyltransferase reactions during methanogenesis. Mediates the ATP-dependent reduction of corrinoid proteins from the inactive cobalt(II) state to the active cobalt(I) state. Acts on the corrinoid proteins involved in methanogenesis from monomethylamine (MMA), dimethylamine (DMA) and trimethylamine (TMA), namely MtmC, MtbC and MttC, respectively. In Methanosarcina barkeri, this protein is [Co(II) methylated amine-specific corrinoid protein] reductase.